Here is a 338-residue protein sequence, read N- to C-terminus: Ketol-acid reductoisomerase (NADP(+)) (338 aa).

A KARI N-terminal Rossmann domain is found at 1–181; sequence MKVFYDKDAD…GGGRAGIIET (181 aa). Residues 24–27, arginine 47, and serine 52 contribute to the NADP(+) site; that span reads YGSQ. Residue histidine 107 is part of the active site. Glycine 133 is a binding site for NADP(+). A KARI C-terminal knotted domain is found at 182 to 327; it reads NFREETETDL…AKLRSMMPWI (146 aa). Mg(2+) contacts are provided by aspartate 190, glutamate 194, glutamate 226, and glutamate 230. Substrate is bound at residue serine 251.

This sequence belongs to the ketol-acid reductoisomerase family. Requires Mg(2+) as cofactor.

It catalyses the reaction (2R)-2,3-dihydroxy-3-methylbutanoate + NADP(+) = (2S)-2-acetolactate + NADPH + H(+). The catalysed reaction is (2R,3R)-2,3-dihydroxy-3-methylpentanoate + NADP(+) = (S)-2-ethyl-2-hydroxy-3-oxobutanoate + NADPH + H(+). It functions in the pathway amino-acid biosynthesis; L-isoleucine biosynthesis; L-isoleucine from 2-oxobutanoate: step 2/4. Its pathway is amino-acid biosynthesis; L-valine biosynthesis; L-valine from pyruvate: step 2/4. Its function is as follows. Involved in the biosynthesis of branched-chain amino acids (BCAA). Catalyzes an alkyl-migration followed by a ketol-acid reduction of (S)-2-acetolactate (S2AL) to yield (R)-2,3-dihydroxy-isovalerate. In the isomerase reaction, S2AL is rearranged via a Mg-dependent methyl migration to produce 3-hydroxy-3-methyl-2-ketobutyrate (HMKB). In the reductase reaction, this 2-ketoacid undergoes a metal-dependent reduction by NADPH to yield (R)-2,3-dihydroxy-isovalerate. This Paraburkholderia phytofirmans (strain DSM 17436 / LMG 22146 / PsJN) (Burkholderia phytofirmans) protein is Ketol-acid reductoisomerase (NADP(+)).